The sequence spans 443 residues: Chromosome partition protein MukF (443 aa).

The tract at residues 209 to 237 is leucine-zipper; it reads LDETSGNLRELQDVLNASGDKLQSQLLRI.

The protein belongs to the MukF family. In terms of assembly, interacts, and probably forms a ternary complex, with MukE and MukB via its C-terminal region. The complex formation is stimulated by calcium or magnesium. It is required for an interaction between MukE and MukB.

It localises to the cytoplasm. Its subcellular location is the nucleoid. In terms of biological role, involved in chromosome condensation, segregation and cell cycle progression. May participate in facilitating chromosome segregation by condensation DNA from both sides of a centrally located replisome during cell division. Not required for mini-F plasmid partitioning. Probably acts via its interaction with MukB and MukE. Overexpression results in anucleate cells. It has a calcium binding activity. This chain is Chromosome partition protein MukF, found in Glaesserella parasuis serovar 5 (strain SH0165) (Haemophilus parasuis).